A 284-amino-acid chain; its full sequence is Polyamine aminopropyltransferase (284 aa).

The PABS domain occupies 2 to 237 (ELWYTEKHTE…GHWLFGFASK (236 aa)). Gln31 contributes to the S-methyl-5'-thioadenosine binding site. Residues His62 and Asp86 each coordinate spermidine. S-methyl-5'-thioadenosine is bound by residues Glu106 and 137-138 (DG). The active-site Proton acceptor is Asp155. 155–158 (DSTD) lines the spermidine pocket. Pro162 lines the S-methyl-5'-thioadenosine pocket.

Belongs to the spermidine/spermine synthase family. As to quaternary structure, homodimer or homotetramer.

It is found in the cytoplasm. It carries out the reaction S-adenosyl 3-(methylsulfanyl)propylamine + putrescine = S-methyl-5'-thioadenosine + spermidine + H(+). It participates in amine and polyamine biosynthesis; spermidine biosynthesis; spermidine from putrescine: step 1/1. Catalyzes the irreversible transfer of a propylamine group from the amino donor S-adenosylmethioninamine (decarboxy-AdoMet) to putrescine (1,4-diaminobutane) to yield spermidine. This is Polyamine aminopropyltransferase from Clostridium botulinum (strain Eklund 17B / Type B).